The sequence spans 1375 residues: MAKASVELTRELQDSIRRCLSQGAVLQQHRVKLETKPKKFEDRVLALTSWRLHLFPLKVPAKVESSFNVLEIRAFNTLSQNQILVETERGTVSMRLPSAESVDQVTRHVSSALSKVCPGPGCLIRRGNADTPEGPRDTSPNSETSTSTTHSVCGGFSETYAALCDYNGLHCREEVQWDVDTIYHAEDNREFNLLDFSHLESRDLALMVAALAYNQWFTKLYCKDLRLGSEVLEQVLHTLSKSGSLEELVLDNAGLKTDFVQKLAGVFGENGSCVLHALILSHNPIEDKGFLSLSQQLLCFPTGLTKLCLAKTAISPRGLQALGQTFGANPAFASSLRYLDLSKNPGLLATDEANALYSFLAQPNALVHLDLSGTDCAVDMLLGALLHGCCSHLTYLNLARNSCSHRKGREAPPAFKQFFSSVYTLSHVNLSATRLPLEALRALLQGLSLNSHLSDLHLDLSSCELRSAGAQALQEQLGAVTCIGSLDLSDNGFDSDLLTLVPALGKNKSLKHLFLGKNFNVKAKTLEEILHKLVQLIQEEDCSLQSLSVADSRLKLRTSILINALGSNTCLAKVDLSGNGMEDIGAKMLSKALQINSSLRTILWDRNNTSALGFLDIARALESNHTLRFMSFPVSDISQAYRSAPERTEDVWQKIQWCLVRNNHSQTCPQEQAFRLQQGLVTSSAEQMLQRLCGRVQEEVRALRLCPLEPVQDELLYARDLIKDAKNSRALFPSLYELGHVLANDGPVRQRLESVASEVSKAVDKELQVILESMVSLTQELCPVAMRVAEGHNKMLSNVAERVTVPRNFIRGALLEQAGQDIQNKLDEVKLSVVTYLTNSIVDEILQELYHSHKSLARHLTQLRTLSDPPGGASQGQDPSSRGRGRNHDHEETDDELGTNIDTMAIKKQKRCRKIRPVSAFISGSPQDMESQLGSLGIPPGWFSGLGASQTTASGSWEGLSELPTHGYKLRHQTQGRPRPPRTTPPGPGRPSVPVPGPRQENGMATRLDEGLEDFFSRRVMDESSSYPRTLRTMRPGLSEPPLPPLQKKRRRGLFHFRRPRSFKGDRGPGSPTAGLLLPPPPPPPPTQESPPSPDPPSLGNNSSPCWSPEEESSLLPGFGGARGSSFCRKMGTERLEAGEGAPAPGTAQQPRVHGGVALPGLGRTKGWSFDGKREGTDPDQEDSTQAWQKRRSSDDAGPGAWKPPPPPQSSKPSFSAMRRAEATWHIAEESAANHSCQSPSPASQDGDEEKQGALFPERMVPTRNAKLQEPPIGPRPPKPVAVPRGRRAPQVPGGREETESSSAAPGANKPRLRLGSQQDQEEPEGQGPTDQGRRTAPLKPKRTRRAQSCDKLEPDRRQPPDPTGVCGTSEPGTD.

The segment at 124–151 (IRRGNADTPEGPRDTSPNSETSTSTTHS) is disordered. Positions 138–151 (TSPNSETSTSTTHS) are enriched in low complexity. 10 LRR repeats span residues 244 to 264 (SLEELVLDNAGLKTDFVQKLA), 274 to 295 (VLHALILSHNPIEDKGFLSLSQ), 303 to 323 (GLTKLCLAKTAISPRGLQALG), 335 to 357 (SLRYLDLSKNPGLLATDEANALY), 365 to 386 (ALVHLDLSGTDCAVDMLLGALL), 392 to 413 (HLTYLNLARNSCSHRKGREAPP), 424 to 444 (TLSHVNLSATRLPLEALRALL), 455 to 475 (DLHLDLSSCELRSAGAQALQE), 482 to 501 (CIGSLDLSDNGFDSDLLTLV), and 509 to 530 (SLKHLFLGKNFNVKAKTLEEIL). Disordered stretches follow at residues 864 to 901 (RTLSDPPGGASQGQDPSSRGRGRNHDHEETDDELGTNI) and 969 to 1375 (KLRH…PGTD). The segment covering 981-997 (PRTTPPGPGRPSVPVPG) has biased composition (pro residues). The segment covering 1007–1022 (RLDEGLEDFFSRRVMD) has biased composition (basic and acidic residues). Basic residues predominate over residues 1047–1062 (QKKRRRGLFHFRRPRS). The segment covering 1078–1097 (LPPPPPPPPTQESPPSPDPP) has biased composition (pro residues). A compositionally biased stretch (low complexity) spans 1098–1108 (SLGNNSSPCWS). Over residues 1219 to 1229 (RRAEATWHIAE) the composition is skewed to basic and acidic residues. Over residues 1233 to 1244 (ANHSCQSPSPAS) the composition is skewed to polar residues. A compositionally biased stretch (pro residues) spans 1272–1281 (PIGPRPPKPV). Basic and acidic residues predominate over residues 1348-1360 (QSCDKLEPDRRQP).

The protein belongs to the CARMIL family.

It is found in the cytoplasm. The protein resides in the cell membrane. The polypeptide is Capping protein, Arp2/3 and myosin-I linker protein 3 (Carmil3) (Mus musculus (Mouse)).